The chain runs to 181 residues: Crossover junction endodeoxyribonuclease RuvC (181 aa).

Residues Asp7, Glu67, and Asp139 contribute to the active site. Positions 7, 67, and 139 each coordinate Mg(2+).

This sequence belongs to the RuvC family. As to quaternary structure, homodimer which binds Holliday junction (HJ) DNA. The HJ becomes 2-fold symmetrical on binding to RuvC with unstacked arms; it has a different conformation from HJ DNA in complex with RuvA. In the full resolvosome a probable DNA-RuvA(4)-RuvB(12)-RuvC(2) complex forms which resolves the HJ. Mg(2+) is required as a cofactor.

The protein localises to the cytoplasm. The catalysed reaction is Endonucleolytic cleavage at a junction such as a reciprocal single-stranded crossover between two homologous DNA duplexes (Holliday junction).. Its function is as follows. The RuvA-RuvB-RuvC complex processes Holliday junction (HJ) DNA during genetic recombination and DNA repair. Endonuclease that resolves HJ intermediates. Cleaves cruciform DNA by making single-stranded nicks across the HJ at symmetrical positions within the homologous arms, yielding a 5'-phosphate and a 3'-hydroxyl group; requires a central core of homology in the junction. The consensus cleavage sequence is 5'-(A/T)TT(C/G)-3'. Cleavage occurs on the 3'-side of the TT dinucleotide at the point of strand exchange. HJ branch migration catalyzed by RuvA-RuvB allows RuvC to scan DNA until it finds its consensus sequence, where it cleaves and resolves the cruciform DNA. This Cupriavidus metallidurans (strain ATCC 43123 / DSM 2839 / NBRC 102507 / CH34) (Ralstonia metallidurans) protein is Crossover junction endodeoxyribonuclease RuvC.